The primary structure comprises 171 residues: Disulfide bond formation protein B (171 aa).

The Cytoplasmic segment spans residues 1–8 (MQWSYRFV). Residues 9–25 (SGLLVLASIVGMTFALY) traverse the membrane as a helical segment. Residues 26–43 (LEHFKGLEPCPLCIFQRV) are Periplasmic-facing. Cys-35 and Cys-38 are joined by a disulfide. Residues 44-60 (GLMAMGIVALIAFLHNP) traverse the membrane as a helical segment. The Cytoplasmic segment spans residues 61–67 (VSNAFKR). A helical membrane pass occupies residues 68–85 (VYAFLATLGILWSVGVAI). Over 86-142 (RHVWLQTLPPDQVPSCGPGLNYLLDALPLKTVLQQVLQGSGECAAIHWTFLGQSLPV) the chain is Periplasmic. Residues Cys-101 and Cys-128 are joined by a disulfide bond. The helical transmembrane segment at 143-161 (WSLAYFSLILLVCVWQLLR) threads the bilayer. At 162–171 (RYPVIVTKKK) the chain is on the cytoplasmic side.

It belongs to the DsbB family.

It is found in the cell inner membrane. Functionally, required for disulfide bond formation in some periplasmic proteins. Acts by oxidizing the DsbA protein. The sequence is that of Disulfide bond formation protein B from Acinetobacter baylyi (strain ATCC 33305 / BD413 / ADP1).